A 505-amino-acid polypeptide reads, in one-letter code: GDP-Man:Man(3)GlcNAc(2)-PP-Dol alpha-1,2-mannosyltransferase (505 aa).

Over 1-4 (MSTM) the chain is Lumenal. The chain crosses the membrane as a helical span at residues 5–25 (LWVVVAAVLLFVLPVVRVPML). Residues 26–130 (DLTRRNIIRW…KWVDGSTWKH (105 aa)) are Cytoplasmic-facing. The helical intramembrane region spans 131-151 (LTLVGQAMGSMLLTIEALLRF). The Cytoplasmic segment spans residues 152–374 (VPDIWLDTMG…FGINAMWNEH (223 aa)). Residues 375 to 395 (FGIAVVEYAAAGLISLVHASA) constitute an intramembrane region (helical). At 396–505 (GPLLDIIVPW…EHKTSRLGSN (110 aa)) the chain is on the cytoplasmic side.

The protein belongs to the glycosyltransferase group 1 family.

The protein localises to the endoplasmic reticulum membrane. The catalysed reaction is an alpha-D-Man-(1-&gt;3)-[alpha-D-Man-(1-&gt;6)]-beta-D-Man-(1-&gt;4)-beta-D-GlcNAc-(1-&gt;4)-alpha-D-GlcNAc-diphospho-di-trans,poly-cis-dolichol + 2 GDP-alpha-D-mannose = an alpha-D-Man-(1-&gt;2)-alpha-D-Man-(1-&gt;2)-alpha-D-Man-(1-&gt;3)-[alpha-D-Man-(1-&gt;6)]-beta-D-Man-(1-&gt;4)-beta-D-GlcNAc-(1-&gt;4)-alpha-D-GlcNAc-diphospho-di-trans,poly-cis-dolichol + 2 GDP + 2 H(+). The protein operates within protein modification; protein glycosylation. Its function is as follows. GDP-Man:Man(3)GlcNAc(2)-PP-Dol alpha-1,2-mannosyltransferase that operates in the biosynthetic pathway of dolichol-linked oligosaccharides, the glycan precursors employed in protein asparagine (N)-glycosylation. The assembly of dolichol-linked oligosaccharides begins on the cytosolic side of the endoplasmic reticulum membrane and finishes in its lumen. The sequential addition of sugars to dolichol pyrophosphate produces dolichol-linked oligosaccharides containing fourteen sugars, including two GlcNAcs, nine mannoses and three glucoses. Once assembled, the oligosaccharide is transferred from the lipid to nascent proteins by oligosaccharyltransferases. Catalyzes, on the cytoplasmic face of the endoplasmic reticulum, the addition of the fourth and fifth mannose residues to the dolichol-linked oligosaccharide chain, to produce Man(5)GlcNAc(2)-PP-dolichol core oligosaccharide. The chain is GDP-Man:Man(3)GlcNAc(2)-PP-Dol alpha-1,2-mannosyltransferase (ALG11) from Candida glabrata (strain ATCC 2001 / BCRC 20586 / JCM 3761 / NBRC 0622 / NRRL Y-65 / CBS 138) (Yeast).